Reading from the N-terminus, the 492-residue chain is Cytoplasmic dynein 1 light intermediate chain 2 (492 aa).

Residue 61–68 (GEDGSGKT) participates in ATP binding. Disordered stretches follow at residues 187-206 (PEEG…SGSD), 371-423 (AKQP…KNNA), and 437-492 (LSKK…ENEA). Ser-194 carries the post-translational modification Phosphoserine. Residues 371-381 (AKQPATPTRAS) show a composition bias toward polar residues. A phosphoserine mark is found at Ser-383 and Ser-391. Arg-397 is modified (omega-N-methylarginine). Phosphothreonine is present on Thr-441. 2 positions are modified to phosphoserine: Ser-443 and Ser-446. The span at 452–469 (VQSTAKKSGQKTVLSNVQ) shows a compositional bias: polar residues. Residues 471 to 480 (ELDRMTRKPD) are compositionally biased toward basic and acidic residues. Positions 482–492 (MVTNSSTENEA) are enriched in polar residues.

The protein belongs to the dynein light intermediate chain family. As to quaternary structure, homodimer. The cytoplasmic dynein 1 complex consists of two catalytic heavy chains (HCs) and a number of non-catalytic subunits presented by intermediate chains (ICs), light intermediate chains (LICs) and light chains (LCs); the composition seems to vary in respect to the IC, LIC and LC composition. The heavy chain homodimer serves as a scaffold for the probable homodimeric assembly of the respective non-catalytic subunits. The ICs and LICs bind directly to the HC dimer and the LCs assemble on the IC dimer. Interacts with DYNC1H1; DYNC1LI1 and DYNC1LI2 bind mutually exclusive to DYNC1H.

The protein resides in the cytoplasm. It is found in the cytoskeleton. Its function is as follows. Acts as one of several non-catalytic accessory components of the cytoplasmic dynein 1 complex that are thought to be involved in linking dynein to cargos and to adapter proteins that regulate dynein function. Cytoplasmic dynein 1 acts as a motor for the intracellular retrograde motility of vesicles and organelles along microtubules. May play a role in binding dynein to membranous organelles or chromosomes. The sequence is that of Cytoplasmic dynein 1 light intermediate chain 2 (DYNC1LI2) from Pongo abelii (Sumatran orangutan).